We begin with the raw amino-acid sequence, 593 residues long: Brain-enriched guanylate kinase-associated protein (593 aa).

The residue at position 1 (Met1) is an N-acetylmethionine. Residue Tyr137 is modified to Phosphotyrosine. Residues Ser200, Ser229, Ser246, Ser265, Ser346, and Ser373 each carry the phosphoserine modification. Arg381 is modified (asymmetric dimethylarginine). Ser455, Ser465, Ser475, Ser477, Ser500, Ser502, Ser506, Ser553, and Ser563 each carry phosphoserine. The disordered stretch occupies residues 499–593 (LSLSPGRSAD…KAQLYGTLLN (95 aa)).

In terms of assembly, interacts with DLG4 and DLGAP1 and forms a ternary complex.

It localises to the cytoplasm. It is found in the membrane. May sustain the structure of the postsynaptic density (PSD). The sequence is that of Brain-enriched guanylate kinase-associated protein (BEGAIN) from Homo sapiens (Human).